The primary structure comprises 62 residues: Photosystem II reaction center protein Z (62 aa).

The next 2 helical transmembrane spans lie at 8-28 and 41-61; these read AVFALIATSSILLISVPVVFA and FSGTSLWIGLVFLVGILNSLI.

It belongs to the PsbZ family. As to quaternary structure, PSII is composed of 1 copy each of membrane proteins PsbA, PsbB, PsbC, PsbD, PsbE, PsbF, PsbH, PsbI, PsbJ, PsbK, PsbL, PsbM, PsbT, PsbY, PsbZ, Psb30/Ycf12, at least 3 peripheral proteins of the oxygen-evolving complex and a large number of cofactors. It forms dimeric complexes.

It is found in the plastid. The protein localises to the chloroplast thylakoid membrane. May control the interaction of photosystem II (PSII) cores with the light-harvesting antenna, regulates electron flow through the 2 photosystem reaction centers. PSII is a light-driven water plastoquinone oxidoreductase, using light energy to abstract electrons from H(2)O, generating a proton gradient subsequently used for ATP formation. This Gossypium barbadense (Sea Island cotton) protein is Photosystem II reaction center protein Z.